A 416-amino-acid polypeptide reads, in one-letter code: S-layer protein B (416 aa).

An N-terminal signal peptide occupies residues 1 to 20 (MKYNLLPLILLSLLVAPLLA). Residues 310–330 (IASLNSTIQSLESQISSLSST) are a coiled coil. Residues 392-412 (IALAVSIIAIIISIVVLILVF) traverse the membrane as a helical segment.

It belongs to the Sulfolobales SlaB family. In terms of assembly, the mushroom-shaped unit cells of the Sulfolobales' S-layers may consist of three SlaB subunits and six SlaA subunits.

Its subcellular location is the secreted. It localises to the cell wall. The protein localises to the S-layer. It is found in the cell membrane. Its function is as follows. S-layer small protein. May anchor the complex to the cell membrane. This is S-layer protein B from Metallosphaera sedula (strain ATCC 51363 / DSM 5348 / JCM 9185 / NBRC 15509 / TH2).